Reading from the N-terminus, the 395-residue chain is Probable protein arginine N-methyltransferase 6.2 (395 aa).

Residues 1-11 (MFAGGADGGNG) show a composition bias toward gly residues. A disordered region spans residues 1-37 (MFAGGADGGNGHLPRPRRARRGGGGGGGMGSPPLGPP). The SAM-dependent MTase PRMT-type domain occupies 45 to 390 (DMAYFKAYSH…YFTRDQWYVK (346 aa)). S-adenosyl-L-methionine-binding residues include histidine 58, arginine 67, glycine 91, aspartate 113, and glutamate 142. Catalysis depends on residues glutamate 156 and glutamate 165. The disordered stretch occupies residues 300–324 (KKQANQCLDGNTQDASPSNKKKKAD). Residues 302–317 (QANQCLDGNTQDASPS) are compositionally biased toward polar residues.

This sequence belongs to the class I-like SAM-binding methyltransferase superfamily. Protein arginine N-methyltransferase family. PRMT6 subfamily.

Arginine methyltransferase that can both catalyze the formation of omega-N monomethylarginine (MMA) and asymmetrical dimethylarginine (aDMA). The chain is Probable protein arginine N-methyltransferase 6.2 (PRMT6.2) from Oryza sativa subsp. indica (Rice).